The chain runs to 622 residues: Intermediate filament protein ifc-2 (622 aa).

The head stretch occupies residues 19–54 (SGTYASGFGQLVSGMSSAGAICTTQIRDAREREKRE). The IF rod domain maps to 51-399 (EKREIGLLND…ILLNGANVTT (349 aa)). The interval 55–86 (IGLLNDRLADYIEKVRFLEAQNRCLSHDIDIL) is coil 1A. Positions 87-99 (RNGFSGGGHVSGL) are linker 1. The interval 100 to 237 (FDAEINQAKH…TENNVRIEQE (138 aa)) is coil 1B. Residues 238-255 (LVFIRRDTTADNRDYFRH) form a linker 12 region. Residues 256–399 (ELQAAIRDIR…ILLNGANVTT (144 aa)) are coil 2. The segment at 400–550 (YTSNTHGSGS…RVDVGGFRIE (151 aa)) is tail. The LTD domain occupies 509–622 (SGRHFHSWYL…EERAWFVYLD (114 aa)).

This sequence belongs to the intermediate filament family. Expressed in intestinal cells and at desmosomes in intestine and pharynx of the larva.

The protein localises to the cytoplasm. In terms of biological role, cytoplasmic intermediate filaments provide mechanical strength to cells. Not essential protein, although its absence leads to mild defects in locomotion. This chain is Intermediate filament protein ifc-2 (ifc-2), found in Caenorhabditis elegans.